The primary structure comprises 438 residues: Na(+)/H(+) antiporter NhaA (438 aa).

Transmembrane regions (helical) follow at residues 23 to 43 (FGGIFLFLNAVLAMVVANSFL), 62 to 82 (FFIGFSLHNWIDDVLMALFFL), 104 to 124 (SFPVIAALGGMIAPGLIYFFL), 133 to 153 (GFGIPMATDIAFALGVIMLLG), 162 to 182 (VFLITLAVADDLGAIVVIALF), 185 to 205 (TNLKFAWLLGALGVVLILAVL), 212 to 232 (SLIPYLLLGVLLWFCVHQSGI), 302 to 322 (FLAPISGYFIMPLFAFANAGV), 337 to 357 (LGVILGLCLGKPLGIFLITFI), 372 to 392 (WWHILGAGLLAGIGFTMSMFI), and 410 to 430 (IAILLGSLISGIIGALYLFVL).

It belongs to the NhaA Na(+)/H(+) (TC 2.A.33) antiporter family.

The protein localises to the cell inner membrane. The catalysed reaction is Na(+)(in) + 2 H(+)(out) = Na(+)(out) + 2 H(+)(in). Its function is as follows. Na(+)/H(+) antiporter that extrudes sodium in exchange for external protons. The chain is Na(+)/H(+) antiporter NhaA from Helicobacter pylori (strain G27).